We begin with the raw amino-acid sequence, 241 residues long: Phosphatidylglycerophosphatase B (241 aa).

The chain crosses the membrane as a helical span at residues 1 to 21 (MFKRLSLYTLLLCLVPFFIWG). Residues 22 to 52 (ISYQWHGNSQLTQADYWLYLLTETGSVPYAL) are Periplasmic-facing. Residues 53–62 (ITCVLFTLLF) form a helical membrane-spanning segment. The Cytoplasmic portion of the chain corresponds to 63–67 (AFLFK). Residues 68–91 (NPKQWILGVIVMGISVIATQAAKT) traverse the membrane as a helical segment. The Periplasmic segment spans residues 92–158 (GAKALFEEPR…ENETGYSFPS (67 aa)). The interval 94 to 102 (KALFEEPRP) is phosphatase sequence motif I. The tract at residues 157-160 (PSGH) is phosphatase sequence motif II. A helical transmembrane segment spans residues 159–173 (GHTIFAATWLMLAVG). His-160 serves as the catalytic Proton donor; for a subset of substrates. Over 174-184 (FTQLLGNRSFK) the chain is Cytoplasmic. The chain crosses the membrane as a helical span at residues 185-204 (AKLLVVGIAVWGLLMLISRV). Positions 202–213 (SRVRLGMHYPID) are phosphatase sequence motif III. Over 205 to 210 (RLGMHY) the chain is Periplasmic. Catalysis depends on His-209, which acts as the Nucleophile. The helical transmembrane segment at 211–235 (PIDLLVATLLAWLINSIIFAFLKKK) threads the bilayer. Residues 236-241 (AIFVMK) lie on the Cytoplasmic side of the membrane.

Belongs to the PA-phosphatase related phosphoesterase family.

The protein localises to the cell inner membrane. Its subcellular location is the cell outer membrane. The enzyme catalyses a 1,2-diacyl-sn-glycero-3-phospho-(1'-sn-glycero-3'-phosphate) + H2O = a 1,2-diacyl-sn-glycero-3-phospho-(1'-sn-glycerol) + phosphate. It carries out the reaction a 1,2-diacyl-sn-glycerol 3-diphosphate + H2O = a 1,2-diacyl-sn-glycero-3-phosphate + phosphate + H(+). It catalyses the reaction a 1,2-diacyl-sn-glycero-3-phosphate + H2O = a 1,2-diacyl-sn-glycerol + phosphate. The catalysed reaction is di-trans,octa-cis-undecaprenyl diphosphate + H2O = di-trans,octa-cis-undecaprenyl phosphate + phosphate + H(+). The protein operates within phospholipid metabolism; phosphatidylglycerol biosynthesis; phosphatidylglycerol from CDP-diacylglycerol: step 2/2. In terms of biological role, catalyzes the dephosphorylation of diacylglycerol diphosphate (DGPP) to phosphatidate (PA) and the subsequent dephosphorylation of PA to diacylglycerol (DAG). Also has undecaprenyl pyrophosphate phosphatase activity, required for the biosynthesis of the lipid carrier undecaprenyl phosphate. Can also use lysophosphatidic acid (LPA) and phosphatidylglycerophosphate as substrates. The pattern of activities varies according to subcellular location, PGP phosphatase activity is higher in the cytoplasmic membrane, whereas PA and LPA phosphatase activities are higher in the outer membrane. Activity is independent of a divalent cation ion and insensitive to inhibition by N-ethylmaleimide. The polypeptide is Phosphatidylglycerophosphatase B (pgpB) (Haemophilus influenzae (strain ATCC 51907 / DSM 11121 / KW20 / Rd)).